Here is a 352-residue protein sequence, read N- to C-terminus: Organic solute transporter subunit alpha (352 aa).

Residues 1 to 45 (MDVAHPEEVTRFSPDILMEKFNVSEACFLPPPISIQLILQLTWLD) are Extracellular-facing. N-linked (GlcNAc...) asparagine glycosylation occurs at Asn22. Residues 46–66 (IGVFAALTAMTVLTIAIYLEI) traverse the membrane as a helical segment. The Cytoplasmic portion of the chain corresponds to 67–82 (VCYLMDKVKCPIKRKT). A helical membrane pass occupies residues 83–103 (LMWNSAAPTVIAITSCLGLWV). Topologically, residues 104–108 (PRAIM) are extracellular. Residues 109-129 (FVDMAAAMYFGVGFYLMLLII) form a helical membrane-spanning segment. The Cytoplasmic segment spans residues 130 to 173 (VQGYGGEEAMLQHLATHTIRISTGPCCCCCPCLPHIHLTRQKYK). The helical transmembrane segment at 174–194 (IFVLGAFQVAFLRPALFLLGV) threads the bilayer. Over 195-210 (VLWTNGLYDPDDWSST) the chain is Extracellular. Residues 211–231 (SIFLWLNLFLGVSTILGLWPV) form a helical membrane-spanning segment. At 232–250 (NVLFRHSKVLMADQKLTCK) the chain is on the cytoplasmic side. A helical transmembrane segment spans residues 251 to 271 (FALFQAILILSSLQNSIIGTL). The Extracellular portion of the chain corresponds to 272-294 (AGAGHIGCAPPYSARTRGQQMNN). Residues 295–312 (QLLIIEMFFVGILTRISY) traverse the membrane as a helical segment. Residues 313 to 352 (RKRDDRPGHRHVGEVQQIVRECDQPAIADQQADHSSISHI) lie on the Cytoplasmic side of the membrane.

This sequence belongs to the OST-alpha family. Interacts with slc51b. The Ost-alpha/Ost-beta complex is a heterodimer composed of alpha (slc51a) and beta (slc51b) subunit. Expressed in liver.

The protein resides in the cell membrane. It is found in the endoplasmic reticulum membrane. The enzyme catalyses taurocholate(out) = taurocholate(in). The catalysed reaction is prostaglandin E2(out) = prostaglandin E2(in). It carries out the reaction estrone 3-sulfate(out) = estrone 3-sulfate(in). It catalyses the reaction dehydroepiandrosterone 3-sulfate(out) = dehydroepiandrosterone 3-sulfate(in). The enzyme catalyses tauroursodeoxycholate(out) = tauroursodeoxycholate(in). The catalysed reaction is glycoursodeoxycholate(out) = glycoursodeoxycholate(in). It carries out the reaction glycocholate(out) = glycocholate(in). It catalyses the reaction taurochenodeoxycholate(out) = taurochenodeoxycholate(in). The enzyme catalyses glycochenodeoxycholate(out) = glycochenodeoxycholate(in). The catalysed reaction is taurodeoxycholate(out) = taurodeoxycholate(in). It carries out the reaction glycodeoxycholate(out) = glycodeoxycholate(in). Functionally, essential component of the Ost-alpha/Ost-beta complex, a heterodimer that acts as the intestinal basolateral transporter responsible for the translocation of bile acids (such as taurocholate), steroids (such as estrone sulfate), and eicosanoids (such as prostaglandin E2). The polypeptide is Organic solute transporter subunit alpha (slc51a) (Leucoraja erinaceus (Little skate)).